Reading from the N-terminus, the 330-residue chain is Homeobox protein Hox-C13 (330 aa).

Residues 30 to 47 (GGGGGGGGGTGGAGGGCS) show a composition bias toward gly residues. The interval 30–50 (GGGGGGGGGTGGAGGGCSGAS) is disordered. A DNA-binding region (homeobox) is located at residues 260 to 319 (GRKKRVPYTKVQLKELEKEYAASKFITKEKRRRISATTNLSERQVTIWFQNRRVKEKKVV).

This sequence belongs to the Abd-B homeobox family.

The protein localises to the nucleus. Transcription factor which plays a role in hair follicle differentiation. Regulates FOXQ1 expression and that of other hair-specific genes. The sequence is that of Homeobox protein Hox-C13 (HOXC13) from Homo sapiens (Human).